The following is a 396-amino-acid chain: Acetate kinase (396 aa).

Position 8 (N8) interacts with Mg(2+). K15 lines the ATP pocket. Residue R90 participates in substrate binding. The active-site Proton donor/acceptor is D147. ATP is bound by residues 207 to 211, 283 to 285, and 330 to 334; these read HLGSG, DMR, and GIGEN. E384 contributes to the Mg(2+) binding site.

It belongs to the acetokinase family. As to quaternary structure, homodimer. The cofactor is Mg(2+). Requires Mn(2+) as cofactor.

The protein resides in the cytoplasm. The catalysed reaction is acetate + ATP = acetyl phosphate + ADP. The protein operates within metabolic intermediate biosynthesis; acetyl-CoA biosynthesis; acetyl-CoA from acetate: step 1/2. Its function is as follows. Catalyzes the formation of acetyl phosphate from acetate and ATP. Can also catalyze the reverse reaction. This is Acetate kinase from Lacticaseibacillus paracasei (strain ATCC 334 / BCRC 17002 / CCUG 31169 / CIP 107868 / KCTC 3260 / NRRL B-441) (Lactobacillus paracasei).